The following is a 281-amino-acid chain: Pantothenate synthetase (281 aa).

ATP is bound at residue 17 to 24; that stretch reads MGFLHEGH. The active-site Proton donor is the His24. (R)-pantoate is bound at residue Gln48. Gln48 provides a ligand contact to beta-alanine. 134 to 137 provides a ligand contact to ATP; that stretch reads GEKD. Gln140 lines the (R)-pantoate pocket. ATP is bound by residues Val163 and 176–179; that span reads LSSR.

This sequence belongs to the pantothenate synthetase family. Homodimer.

It localises to the cytoplasm. It catalyses the reaction (R)-pantoate + beta-alanine + ATP = (R)-pantothenate + AMP + diphosphate + H(+). It functions in the pathway cofactor biosynthesis; (R)-pantothenate biosynthesis; (R)-pantothenate from (R)-pantoate and beta-alanine: step 1/1. Catalyzes the condensation of pantoate with beta-alanine in an ATP-dependent reaction via a pantoyl-adenylate intermediate. This is Pantothenate synthetase from Deinococcus radiodurans (strain ATCC 13939 / DSM 20539 / JCM 16871 / CCUG 27074 / LMG 4051 / NBRC 15346 / NCIMB 9279 / VKM B-1422 / R1).